We begin with the raw amino-acid sequence, 138 residues long: Envelope glycoprotein N (138 aa).

Positions 1–21 (MEWNTLVLGLLVLSVVAESSG) are cleaved as a signal peptide. Residues 22-101 (NNSSTSTSAT…SHMYELSLSS (80 aa)) lie on the Virion surface side of the membrane. A helical transmembrane segment spans residues 102 to 122 (FAAWWTMLNALILMGAFCIVL). Over 123–138 (RHCCFQNFTATTTKGY) the chain is Intravirion.

Belongs to the herpesviridae glycoprotein N family. As to quaternary structure, interacts (via N-terminus) with gM (via N-terminus). The gM-gN heterodimer forms the gCII complex. Post-translationally, O-glycosylated.

The protein localises to the virion membrane. It localises to the host membrane. The protein resides in the host Golgi apparatus. Its subcellular location is the host trans-Golgi network. Functionally, envelope glycoprotein necessary for proper maturation of gM and modulation of its membrane fusion activity. Also plays a critical role in virion morphogenesis. The protein is Envelope glycoprotein N of Human cytomegalovirus (strain AD169) (HHV-5).